We begin with the raw amino-acid sequence, 355 residues long: MDISSYPSLETYEARENTGSRSSNRLAMQISFAMWKIFELYQNEDFTVAMDCIDDVVIFKTSNENPTIVTYQLKTKDATTGNFELRKLIGDNVFLKMYDHIEKIDADVEEIYLITNNPLKFRKKTVNAERILFEKLDEDIKELIEENMSQSKVFADKGLSSKFIYSLVDMSFHNHREISQYKLNSLLMKEKIDISITAADALFNALQDILTTKQNYEFSLQDEFNTVLKKKSYSKTEFTSLLDNSKKINAYVLSFEDIRTNYKSKPLKLKEESLYRRAMASVKEKCNKSPNILQNINEDIFQYAKEQIDINDEITRIELVILLQSVFDDKINVELSKEEKEILYMQNIELALREG.

Its function is as follows. Component of antiviral defense system Lamassu type II, composed of LmuA and LmuB. Expression of Lamassu type II in B.subtilis (strain BEST7003) confers resistance to phage SpBeta. May be a nuclease. The protein is Lamassu protein LmuA of Bacillus cereus (strain VD014).